The primary structure comprises 353 residues: sn-glycerol-3-phosphate import ATP-binding protein UgpC 3 (353 aa).

The ABC transporter domain occupies 4-235; the sequence is IALKDVRKVY…PATTFVATFI (232 aa). 37–44 contacts ATP; sequence GPSGCGKS.

Belongs to the ABC transporter superfamily. sn-glycerol-3-phosphate importer (TC 3.A.1.1.3) family. As to quaternary structure, the complex is composed of two ATP-binding proteins (UgpC), two transmembrane proteins (UgpA and UgpE) and a solute-binding protein (UgpB).

The protein resides in the cell inner membrane. It carries out the reaction sn-glycerol 3-phosphate(out) + ATP + H2O = sn-glycerol 3-phosphate(in) + ADP + phosphate + H(+). In terms of biological role, part of the ABC transporter complex UgpBAEC involved in sn-glycerol-3-phosphate (G3P) import. Responsible for energy coupling to the transport system. The protein is sn-glycerol-3-phosphate import ATP-binding protein UgpC 3 of Agrobacterium fabrum (strain C58 / ATCC 33970) (Agrobacterium tumefaciens (strain C58)).